The primary structure comprises 200 residues: ATP-dependent Clp protease proteolytic subunit 3 (200 aa).

The active-site Nucleophile is the Ser101. His126 is a catalytic residue.

It belongs to the peptidase S14 family. In terms of assembly, fourteen ClpP subunits assemble into 2 heptameric rings which stack back to back to give a disk-like structure with a central cavity, resembling the structure of eukaryotic proteasomes.

It is found in the cytoplasm. It carries out the reaction Hydrolysis of proteins to small peptides in the presence of ATP and magnesium. alpha-casein is the usual test substrate. In the absence of ATP, only oligopeptides shorter than five residues are hydrolyzed (such as succinyl-Leu-Tyr-|-NHMec, and Leu-Tyr-Leu-|-Tyr-Trp, in which cleavage of the -Tyr-|-Leu- and -Tyr-|-Trp bonds also occurs).. Its function is as follows. Cleaves peptides in various proteins in a process that requires ATP hydrolysis. Has a chymotrypsin-like activity. Plays a major role in the degradation of misfolded proteins. The polypeptide is ATP-dependent Clp protease proteolytic subunit 3 (Synechococcus sp. (strain CC9605)).